The sequence spans 616 residues: Proline--tRNA ligase (616 aa).

The protein belongs to the class-II aminoacyl-tRNA synthetase family. ProS type 1 subfamily. Homodimer.

It is found in the cytoplasm. It carries out the reaction tRNA(Pro) + L-proline + ATP = L-prolyl-tRNA(Pro) + AMP + diphosphate. Catalyzes the attachment of proline to tRNA(Pro) in a two-step reaction: proline is first activated by ATP to form Pro-AMP and then transferred to the acceptor end of tRNA(Pro). As ProRS can inadvertently accommodate and process non-cognate amino acids such as alanine and cysteine, to avoid such errors it has two additional distinct editing activities against alanine. One activity is designated as 'pretransfer' editing and involves the tRNA(Pro)-independent hydrolysis of activated Ala-AMP. The other activity is designated 'posttransfer' editing and involves deacylation of mischarged Ala-tRNA(Pro). The misacylated Cys-tRNA(Pro) is not edited by ProRS. The protein is Proline--tRNA ligase of Lactococcus lactis subsp. cremoris (strain SK11).